Here is a 511-residue protein sequence, read N- to C-terminus: Sodium/proline symporter 2 (511 aa).

The next 13 helical transmembrane spans lie at 16–36, 54–74, 85–105, 139–159, 175–195, 204–224, 246–266, 286–306, 327–347, 381–401, 410–430, 438–458, and 467–487; these read WQTY…GYYG, IGPY…WMIM, LSAM…YFVV, IISG…GFVS, GLLM…YLAV, VIML…LNGI, VLGI…PHII, ISWM…GIAF, ILFH…AIMS, FLMV…WIAW, LVGN…IFSL, TGAL…IVWI, and LFGM…TYFV.

It belongs to the sodium:solute symporter (SSF) (TC 2.A.21) family.

It is found in the cell membrane. The catalysed reaction is L-proline(in) + Na(+)(in) = L-proline(out) + Na(+)(out). Functionally, catalyzes the sodium-dependent uptake of extracellular L-proline. The chain is Sodium/proline symporter 2 (putP2) from Staphylococcus saprophyticus subsp. saprophyticus (strain ATCC 15305 / DSM 20229 / NCIMB 8711 / NCTC 7292 / S-41).